A 314-amino-acid chain; its full sequence is MIEIEKPKIETVELNEDAKYGKFVIEPLERGYGTTLGNSLRRILLSSLPGAAVTAIQIDGVLHEFSTVEGVVEDVTTIILNLKKLALKIYSDEEKTLEIDVQGEGIVTAADITHDSDVEILNPDLYIATLAKDAHFRVRLTAKRGRGYTPADANKSEDQPIGVIPIDSIYTPVSRVTYQVEKTRVGQVANYDKLTLDVWTDGSIGPKEAISLGAKILTEHLNIFVGLTDEAQNAEIMVEKEEDQKEKVLEMTIEELDLSVRSYNCLKRAGINTVQELANKTEEDMMKVRNLGRKSLEEVKHKLEELGLGLRKDD.

The segment at 1 to 228 (MIEIEKPKIE…EHLNIFVGLT (228 aa)) is alpha N-terminal domain (alpha-NTD). Residues 246–314 (EKVLEMTIEE…ELGLGLRKDD (69 aa)) are alpha C-terminal domain (alpha-CTD).

It belongs to the RNA polymerase alpha chain family. In terms of assembly, homodimer. The RNAP catalytic core consists of 2 alpha, 1 beta, 1 beta' and 1 omega subunit. When a sigma factor is associated with the core the holoenzyme is formed, which can initiate transcription.

The catalysed reaction is RNA(n) + a ribonucleoside 5'-triphosphate = RNA(n+1) + diphosphate. Functionally, DNA-dependent RNA polymerase catalyzes the transcription of DNA into RNA using the four ribonucleoside triphosphates as substrates. This chain is DNA-directed RNA polymerase subunit alpha, found in Bacillus cytotoxicus (strain DSM 22905 / CIP 110041 / 391-98 / NVH 391-98).